The primary structure comprises 157 residues: 2-C-methyl-D-erythritol 2,4-cyclodiphosphate synthase (157 aa).

Positions 8 and 10 each coordinate a divalent metal cation. 4-CDP-2-C-methyl-D-erythritol 2-phosphate contacts are provided by residues 8-10 (DVH) and 34-35 (HS). His42 is a binding site for a divalent metal cation. Residues 56–58 (DIG), 61–65 (FPDTD), 100–106 (AQAPKMA), 132–135 (TTTE), Phe139, and Arg142 each bind 4-CDP-2-C-methyl-D-erythritol 2-phosphate.

It belongs to the IspF family. In terms of assembly, homotrimer. Requires a divalent metal cation as cofactor.

It catalyses the reaction 4-CDP-2-C-methyl-D-erythritol 2-phosphate = 2-C-methyl-D-erythritol 2,4-cyclic diphosphate + CMP. It functions in the pathway isoprenoid biosynthesis; isopentenyl diphosphate biosynthesis via DXP pathway; isopentenyl diphosphate from 1-deoxy-D-xylulose 5-phosphate: step 4/6. Its function is as follows. Involved in the biosynthesis of isopentenyl diphosphate (IPP) and dimethylallyl diphosphate (DMAPP), two major building blocks of isoprenoid compounds. Catalyzes the conversion of 4-diphosphocytidyl-2-C-methyl-D-erythritol 2-phosphate (CDP-ME2P) to 2-C-methyl-D-erythritol 2,4-cyclodiphosphate (ME-CPP) with a corresponding release of cytidine 5-monophosphate (CMP). The polypeptide is 2-C-methyl-D-erythritol 2,4-cyclodiphosphate synthase (Stutzerimonas stutzeri (strain A1501) (Pseudomonas stutzeri)).